A 607-amino-acid polypeptide reads, in one-letter code: Tungsten-containing aldehyde ferredoxin oxidoreductase (607 aa).

Residues arginine 76, asparagine 93, glycine 95, arginine 182, alanine 183, glycine 185, and arginine 186 each coordinate tungstopterin. Residues cysteine 288, cysteine 291, and cysteine 295 each contribute to the [4Fe-4S] cluster site. The tungstopterin site is built by aspartate 338, aspartate 343, arginine 446, lysine 452, aspartate 491, and leucine 495. Cysteine 496 provides a ligand contact to [4Fe-4S] cluster. Residue isoleucine 497 coordinates tungstopterin.

It belongs to the AOR/FOR family. In terms of assembly, homodimer. Requires [4Fe-4S] cluster as cofactor. It depends on tungstopterin as a cofactor.

It carries out the reaction an aldehyde + 2 oxidized [2Fe-2S]-[ferredoxin] + H2O = a carboxylate + 2 reduced [2Fe-2S]-[ferredoxin] + 3 H(+). The sequence is that of Tungsten-containing aldehyde ferredoxin oxidoreductase (aor) from Pyrococcus horikoshii (strain ATCC 700860 / DSM 12428 / JCM 9974 / NBRC 100139 / OT-3).